A 189-amino-acid chain; its full sequence is Imidazoleglycerol-phosphate dehydratase (189 aa).

It belongs to the imidazoleglycerol-phosphate dehydratase family.

Its subcellular location is the cytoplasm. It catalyses the reaction D-erythro-1-(imidazol-4-yl)glycerol 3-phosphate = 3-(imidazol-4-yl)-2-oxopropyl phosphate + H2O. Its pathway is amino-acid biosynthesis; L-histidine biosynthesis; L-histidine from 5-phospho-alpha-D-ribose 1-diphosphate: step 6/9. In Nautilia profundicola (strain ATCC BAA-1463 / DSM 18972 / AmH), this protein is Imidazoleglycerol-phosphate dehydratase.